Here is a 213-residue protein sequence, read N- to C-terminus: Na(+)-translocating NADH-quinone reductase subunit E (213 aa).

6 helical membrane-spanning segments follow: residues Ala12–Val32, Ile40–Ile60, Phe92–Phe112, Leu124–Met144, Val155–Ile175, and Leu191–Ile211.

Belongs to the NqrDE/RnfAE family. As to quaternary structure, composed of six subunits; NqrA, NqrB, NqrC, NqrD, NqrE and NqrF.

The protein resides in the cell inner membrane. The catalysed reaction is a ubiquinone + n Na(+)(in) + NADH + H(+) = a ubiquinol + n Na(+)(out) + NAD(+). In terms of biological role, NQR complex catalyzes the reduction of ubiquinone-1 to ubiquinol by two successive reactions, coupled with the transport of Na(+) ions from the cytoplasm to the periplasm. NqrA to NqrE are probably involved in the second step, the conversion of ubisemiquinone to ubiquinol. The sequence is that of Na(+)-translocating NADH-quinone reductase subunit E from Rhodopirellula baltica (strain DSM 10527 / NCIMB 13988 / SH1).